Here is a 448-residue protein sequence, read N- to C-terminus: Amino-acid acetyltransferase (448 aa).

The N-acetyltransferase domain maps to 295 to 433 (EQIRRANIND…KQVLYNYQRR (139 aa)).

This sequence belongs to the acetyltransferase family. ArgA subfamily. Homohexamer.

The protein localises to the cytoplasm. The enzyme catalyses L-glutamate + acetyl-CoA = N-acetyl-L-glutamate + CoA + H(+). It participates in amino-acid biosynthesis; L-arginine biosynthesis; N(2)-acetyl-L-ornithine from L-glutamate: step 1/4. The protein is Amino-acid acetyltransferase of Photorhabdus laumondii subsp. laumondii (strain DSM 15139 / CIP 105565 / TT01) (Photorhabdus luminescens subsp. laumondii).